The following is a 316-amino-acid chain: Ornithine carbamoyltransferase (316 aa).

Residues 59–62 (STRT), Q86, R110, and 137–140 (HPCQ) contribute to the carbamoyl phosphate site. L-ornithine-binding positions include N168, D232, and 236–237 (SM). Residues 273–274 (CL) and R301 each bind carbamoyl phosphate.

The protein belongs to the aspartate/ornithine carbamoyltransferase superfamily. OTCase family.

It localises to the cytoplasm. The catalysed reaction is carbamoyl phosphate + L-ornithine = L-citrulline + phosphate + H(+). It participates in amino-acid biosynthesis; L-arginine biosynthesis; L-arginine from L-ornithine and carbamoyl phosphate: step 1/3. Its function is as follows. Reversibly catalyzes the transfer of the carbamoyl group from carbamoyl phosphate (CP) to the N(epsilon) atom of ornithine (ORN) to produce L-citrulline. This is Ornithine carbamoyltransferase (argF) from Listeria monocytogenes serovar 1/2a (strain ATCC BAA-679 / EGD-e).